A 709-amino-acid chain; its full sequence is Polyribonucleotide nucleotidyltransferase (709 aa).

Mg(2+)-binding residues include D491 and D497. A KH domain is found at P557–I617. An S1 motif domain is found at G641–E709.

This sequence belongs to the polyribonucleotide nucleotidyltransferase family. Mg(2+) serves as cofactor.

Its subcellular location is the cytoplasm. It carries out the reaction RNA(n+1) + phosphate = RNA(n) + a ribonucleoside 5'-diphosphate. Involved in mRNA degradation. Catalyzes the phosphorolysis of single-stranded polyribonucleotides processively in the 3'- to 5'-direction. The sequence is that of Polyribonucleotide nucleotidyltransferase from Helicobacter hepaticus (strain ATCC 51449 / 3B1).